A 148-amino-acid chain; its full sequence is UPF0179 protein Mevan_0979 (148 aa).

It belongs to the UPF0179 family.

This chain is UPF0179 protein Mevan_0979, found in Methanococcus vannielii (strain ATCC 35089 / DSM 1224 / JCM 13029 / OCM 148 / SB).